The primary structure comprises 328 residues: Ferredoxin--NADP reductase 2 (328 aa).

Thr16, Glu35, Gln43, Tyr48, Ile88, Phe123, Asp284, and Thr325 together coordinate FAD.

It belongs to the ferredoxin--NADP reductase type 2 family. As to quaternary structure, homodimer. The cofactor is FAD.

The enzyme catalyses 2 reduced [2Fe-2S]-[ferredoxin] + NADP(+) + H(+) = 2 oxidized [2Fe-2S]-[ferredoxin] + NADPH. This chain is Ferredoxin--NADP reductase 2, found in Oceanobacillus iheyensis (strain DSM 14371 / CIP 107618 / JCM 11309 / KCTC 3954 / HTE831).